Consider the following 31-residue polypeptide: Delta-actitoxin-Dar1b (31 aa).

This sequence belongs to the sea anemone short toxin (type III) family. In terms of processing, contains 4 disulfide bonds.

It localises to the secreted. The protein resides in the nematocyst. In terms of biological role, binds specifically to voltage-gated sodium channels (Nav), thereby delaying their inactivation during signal transduction. The chain is Delta-actitoxin-Dar1b from Dofleinia armata (Armed anemone).